A 678-amino-acid polypeptide reads, in one-letter code: Zinc finger translocation-associated protein (678 aa).

4 disordered regions span residues 1–100 (MEPG…PGRD), 182–250 (LGVQ…GSRG), 329–417 (QPEA…HRRH), and 490–583 (LGPP…NYQP). The segment covering 62-78 (SAPLPSSRARGPASSGR) has biased composition (low complexity). Positions 79-88 (KYSDHCEARA) are enriched in basic and acidic residues. A compositionally biased stretch (acidic residues) spans 187 to 201 (AEEEEEEEEEEEEEG). A Glycyl lysine isopeptide (Lys-Gly) (interchain with G-Cter in SUMO2) cross-link involves residue lysine 375. The span at 388-398 (AEEEEELEEGE) shows a compositional bias: acidic residues. Residues 492–504 (PPRPESPQGPIPP) show a composition bias toward pro residues. Acidic residues-rich tracts occupy residues 513–529 (GGGD…EEWG) and 543–553 (AEEEEDEEDGQ). Positions 560–572 (LPPPPPPPPPPPP) are enriched in pro residues. The segment covering 573 to 583 (RSREQRRNYQP) has biased composition (basic and acidic residues).

This Homo sapiens (Human) protein is Zinc finger translocation-associated protein.